The sequence spans 231 residues: Large ribosomal subunit protein uL1 (231 aa).

The protein belongs to the universal ribosomal protein uL1 family. In terms of assembly, part of the 50S ribosomal subunit.

In terms of biological role, binds directly to 23S rRNA. The L1 stalk is quite mobile in the ribosome, and is involved in E site tRNA release. Protein L1 is also a translational repressor protein, it controls the translation of the L11 operon by binding to its mRNA. This Hydrogenovibrio crunogenus (strain DSM 25203 / XCL-2) (Thiomicrospira crunogena) protein is Large ribosomal subunit protein uL1.